A 488-amino-acid polypeptide reads, in one-letter code: Probable malate:quinone oxidoreductase (488 aa).

It belongs to the MQO family. FAD is required as a cofactor.

It carries out the reaction (S)-malate + a quinone = a quinol + oxaloacetate. It functions in the pathway carbohydrate metabolism; tricarboxylic acid cycle; oxaloacetate from (S)-malate (quinone route): step 1/1. This chain is Probable malate:quinone oxidoreductase, found in Neisseria gonorrhoeae (strain ATCC 700825 / FA 1090).